Here is a 49-residue protein sequence, read N- to C-terminus: MRVNITLACTECGERNYITKKNKRNNPDRVEFKKYCSRDKKQTVHRETK.

This sequence belongs to the bacterial ribosomal protein bL33 family.

The protein is Large ribosomal subunit protein bL33B of Bacillus pumilus (strain SAFR-032).